A 540-amino-acid polypeptide reads, in one-letter code: MAKDIKFSADARSAMVRGVDILADTVKVTLGPKGRNVVLEKAFGSPLITNDGVTIAKEIELEDHFENMGAKLVSEVASKTNDIAGDGTTTATVLTQAIVREGLKNVTAGANPIGIRRGIETAVSAAVEELKEIAQPVSGKEAIAQVAAVSSRSEKVGEYISEAMERVGNDGVITIEESRGMETELEVVEGMQFDRGYLSQYMVTDNEKMVSELENPYILITDKKISNIQEILPLLEEVLKTNRPLLIIADDVDGEALPTLVLNKIRGTFNVVAVKAPGFGDRRKAMLEDIAILTGGTVVTEDLGLDLKDATMQVLGQSAKVTVDKDSTVIVEGAGDSSAIANRVAIIKSQMEATTSDFDREKLQERLAKLAGGVAVIKVGAATETELKEMKLRIEDALNATRAAVEEGIVSGGGTALVNVIEKVAALKLNGDEETGRNIVLRALEEPVRQIAYNAGYEGSVIIERLKQSEIGTGFNAANGEWVDMVTTGIIDPVKVTRSALQNAASVASLILTTEAVVANKPEPEAPTAPAMDPSMMGGF.

ATP-binding positions include 29-32 (TLGP), 86-90 (DGTTT), glycine 413, 476-478 (NAA), and aspartate 492.

The protein belongs to the chaperonin (HSP60) family. As to quaternary structure, forms a cylinder of 14 subunits composed of two heptameric rings stacked back-to-back. Interacts with the co-chaperonin GroES.

It localises to the cytoplasm. The enzyme catalyses ATP + H2O + a folded polypeptide = ADP + phosphate + an unfolded polypeptide.. Its function is as follows. Together with its co-chaperonin GroES, plays an essential role in assisting protein folding. The GroEL-GroES system forms a nano-cage that allows encapsulation of the non-native substrate proteins and provides a physical environment optimized to promote and accelerate protein folding. The polypeptide is Chaperonin GroEL (Streptococcus agalactiae serotype V (strain ATCC BAA-611 / 2603 V/R)).